Here is a 450-residue protein sequence, read N- to C-terminus: NADH-quinone oxidoreductase subunit H (450 aa).

9 helical membrane passes run 18-38 (WWLVLGKALAIFVFLVLTPLL), 91-111 (ILAPVIAAVPAFMAFAVIPFG), 128-148 (LPVAVLYVLAATSIGVYGIVL), 169-189 (VISYEIAMALSFAAVFLDAGT), 201-221 (HTWYVFLLLPSFLIYVTSMVG), 262-282 (VTVSALATTLFLGGWHAPFPL), 292-312 (WWPVLWFTLKVWGFLFVFVWL), 324-344 (FMGLGWKILIPISLVWVMIVA), and 358-378 (SIALVVAGLVVALVVVVLLWK). The interval 387–450 (APEKPVEPRG…TGPTQENSDD (64 aa)) is disordered. A compositionally biased stretch (basic and acidic residues) spans 390–400 (KPVEPRGRAEL). Residues 433 to 450 (VSVTGAHSTGPTQENSDD) are compositionally biased toward polar residues.

Belongs to the complex I subunit 1 family. In terms of assembly, NDH-1 is composed of 14 different subunits. Subunits NuoA, H, J, K, L, M, N constitute the membrane sector of the complex.

It localises to the cell membrane. It catalyses the reaction a quinone + NADH + 5 H(+)(in) = a quinol + NAD(+) + 4 H(+)(out). Its function is as follows. NDH-1 shuttles electrons from NADH, via FMN and iron-sulfur (Fe-S) centers, to quinones in the respiratory chain. The immediate electron acceptor for the enzyme in this species is believed to be ubiquinone. Couples the redox reaction to proton translocation (for every two electrons transferred, four hydrogen ions are translocated across the cytoplasmic membrane), and thus conserves the redox energy in a proton gradient. This subunit may bind ubiquinone. This is NADH-quinone oxidoreductase subunit H from Rhodococcus jostii (strain RHA1).